The following is a 285-amino-acid chain: ATP synthase gamma chain (285 aa).

The protein belongs to the ATPase gamma chain family. F-type ATPases have 2 components, CF(1) - the catalytic core - and CF(0) - the membrane proton channel. CF(1) has five subunits: alpha(3), beta(3), gamma(1), delta(1), epsilon(1). CF(0) has three main subunits: a, b and c.

It localises to the cell inner membrane. Its function is as follows. Produces ATP from ADP in the presence of a proton gradient across the membrane. The gamma chain is believed to be important in regulating ATPase activity and the flow of protons through the CF(0) complex. The protein is ATP synthase gamma chain of Protochlamydia amoebophila (strain UWE25).